Here is a 263-residue protein sequence, read N- to C-terminus: Sepiapterin reductase (263 aa).

NADP(+) contacts are provided by residues 18-24 (GASRGFG), 46-47 (RT), and 73-74 (DL). Substrate is bound by residues 160-161 (SL) and Tyr-173. Lys-177 serves as a coordination point for NADP(+). A substrate-binding site is contributed by Gly-202. NADP(+) is bound at residue 204–209 (LDTDMH). Asp-260 serves as a coordination point for substrate.

The protein belongs to the sepiapterin reductase family. As to quaternary structure, homodimer.

The protein resides in the cytoplasm. It catalyses the reaction L-erythro-7,8-dihydrobiopterin + NADP(+) = L-sepiapterin + NADPH + H(+). The enzyme catalyses (6R)-L-erythro-5,6,7,8-tetrahydrobiopterin + 2 NADP(+) = 6-pyruvoyl-5,6,7,8-tetrahydropterin + 2 NADPH + 2 H(+). In terms of biological role, catalyzes the final one or two reductions in tetra-hydrobiopterin biosynthesis to form 5,6,7,8-tetrahydrobiopterin. This chain is Sepiapterin reductase (spr), found in Xenopus laevis (African clawed frog).